We begin with the raw amino-acid sequence, 425 residues long: MEMKNVKGTKDYLPEEQVLRNKIKRACEDTFERYGCKSLETPTLNMYELMSYKYGGGDEILKEIYTLRDQGKRELALRYDLTIPFAKVVAMNPNIRLPFKRYEIGKVFRDGPIKQGRFREFIQCDVDIVGVESVMAEAELMSMAFELFRTLNLEVTIQYNNRKLLNGILESINIPTERTSDVILSLDKIEKIGIDGVRKDVLERGISEEMADTICNTVLSCLKLSIDDFKDAFNTPLVAEGVNELQQLQQYLIALGINENAIFNPFLARGLTMYTGTVYEIFLKDGSITSSIGSGGRYDNIIGAFRGDNMNYPTVGISFGLDVIYTALSQKETISSTADIFIIPIGTELQCLQIAQQLRSTTSLKVELELTGRKLKRALNYANKENIPYVLIIGEEELSTETAMLRNMKEGSEVKVPLSSLSNYL.

Belongs to the class-II aminoacyl-tRNA synthetase family. Homodimer.

It is found in the cytoplasm. It carries out the reaction tRNA(His) + L-histidine + ATP = L-histidyl-tRNA(His) + AMP + diphosphate + H(+). In Bacillus cereus (strain ZK / E33L), this protein is Histidine--tRNA ligase 1.